We begin with the raw amino-acid sequence, 622 residues long: Putative E3 ubiquitin-protein ligase ORTHRUS 4 (622 aa).

The PHD-type zinc-finger motif lies at 12–62 (DGVCMRCQVTPPSEETLTCGTCVTPWHVSCLLPESLASSTGDWECPDCSGV). An RING-type 1 zinc finger spans residues 129-169 (CSICIQLPERPVTTPCGHNFCLKCFEKWAVGQGKLTCMICR). In terms of domain architecture, YDG spans 258 to 407 (TRNQGVLVGE…HKMCRYLFVR (150 aa)). Residues 498–555 (CQICRKVLSLPVTTPCAHNFCKACLEAKFAGITQLRDRSNGVRKLRAKKNIMTCPCCT) form an RING-type 2 zinc finger. A coiled-coil region spans residues 566–602 (QVNREMMEIIENFKKSEEEAEVAESSNISEEEEEESE). The tract at residues 579-622 (KKSEEEAEVAESSNISEEEEEESEPPTKKIKMDNNSVGDTSLSA) is disordered. A compositionally biased stretch (polar residues) spans 611–622 (DNNSVGDTSLSA).

Its subcellular location is the nucleus. It carries out the reaction S-ubiquitinyl-[E2 ubiquitin-conjugating enzyme]-L-cysteine + [acceptor protein]-L-lysine = [E2 ubiquitin-conjugating enzyme]-L-cysteine + N(6)-ubiquitinyl-[acceptor protein]-L-lysine.. The protein operates within protein modification; protein ubiquitination. E3 ubiquitin-protein ligase. May participate in CpG methylation-dependent transcriptional regulation. In Arabidopsis thaliana (Mouse-ear cress), this protein is Putative E3 ubiquitin-protein ligase ORTHRUS 4 (ORTH4).